A 274-amino-acid polypeptide reads, in one-letter code: Bis(5'-nucleosyl)-tetraphosphatase, symmetrical (274 aa).

This sequence belongs to the Ap4A hydrolase family.

The catalysed reaction is P(1),P(4)-bis(5'-adenosyl) tetraphosphate + H2O = 2 ADP + 2 H(+). Hydrolyzes diadenosine 5',5'''-P1,P4-tetraphosphate to yield ADP. The chain is Bis(5'-nucleosyl)-tetraphosphatase, symmetrical from Buchnera aphidicola subsp. Acyrthosiphon pisum (strain Tuc7).